The sequence spans 162 residues: GTP-dependent dephospho-CoA kinase (162 aa).

Residues aspartate 40, valine 41, valine 42, aspartate 59, lysine 61, and glutamate 111 each contribute to the GTP site.

This sequence belongs to the GTP-dependent DPCK family.

The enzyme catalyses 3'-dephospho-CoA + GTP = GDP + CoA + H(+). It participates in cofactor biosynthesis; coenzyme A biosynthesis. Its function is as follows. Catalyzes the GTP-dependent phosphorylation of the 3'-hydroxyl group of dephosphocoenzyme A to form coenzyme A (CoA). The polypeptide is GTP-dependent dephospho-CoA kinase (Sulfurisphaera tokodaii (strain DSM 16993 / JCM 10545 / NBRC 100140 / 7) (Sulfolobus tokodaii)).